The sequence spans 176 residues: ATP-dependent protease subunit HslV (176 aa).

The active site involves threonine 2. Positions 157, 160, and 163 each coordinate Na(+).

The protein belongs to the peptidase T1B family. HslV subfamily. In terms of assembly, a double ring-shaped homohexamer of HslV is capped on each side by a ring-shaped HslU homohexamer. The assembly of the HslU/HslV complex is dependent on binding of ATP.

It localises to the cytoplasm. It carries out the reaction ATP-dependent cleavage of peptide bonds with broad specificity.. Allosterically activated by HslU binding. Protease subunit of a proteasome-like degradation complex believed to be a general protein degrading machinery. This Photorhabdus laumondii subsp. laumondii (strain DSM 15139 / CIP 105565 / TT01) (Photorhabdus luminescens subsp. laumondii) protein is ATP-dependent protease subunit HslV.